Here is a 427-residue protein sequence, read N- to C-terminus: rRNA-processing protein EBP2 (427 aa).

Basic and acidic residues-rich tracts occupy residues K29–P40 and K49–A65. The disordered stretch occupies residues K29–H190. Residues A45–V174 adopt a coiled-coil conformation. Basic residues predominate over residues K79–L88. Residues K89–G105 are compositionally biased toward basic and acidic residues. The residue at position 104 (S104) is a Phosphoserine. Over residues D106 to G126 the composition is skewed to acidic residues. A compositionally biased stretch (basic and acidic residues) spans R127 to S138. 2 stretches are compositionally biased toward acidic residues: residues E139–D155 and E163–A185. 2 positions are modified to phosphoserine: S177 and S183. Coiled-coil stretches lie at residues K234–K265 and K291–E348. The disordered stretch occupies residues E361 to F427. The segment covering A397 to S407 has biased composition (polar residues). The span at R409 to F427 shows a compositional bias: basic residues.

The protein belongs to the EBP2 family. In terms of assembly, interacts with LOC1, NOP12, SIZ2, ULS1 and WSS1. In terms of processing, sumoylated.

It localises to the nucleus. The protein localises to the nucleolus. Its function is as follows. Required for the processing of the 27S pre-rRNA. Probably involved in the step of the processing of the 27 SA precursor into the 27 SB intermediate. This chain is rRNA-processing protein EBP2 (EBP2), found in Saccharomyces cerevisiae (strain ATCC 204508 / S288c) (Baker's yeast).